A 379-amino-acid chain; its full sequence is L-demethylnoviosyl transferase (379 aa).

Belongs to the glycosyltransferase 28 family.

It catalyses the reaction dTDP-4-O-demethyl-beta-L-noviose + novobiocic acid = desmethyldescarbamoylnovobiocin + dTDP + H(+). It participates in antibiotic biosynthesis; novobiocin biosynthesis. Its activity is regulated as follows. Inhibited by TDP-L-rhamnose, the sugar donor that most closely structurally resembles the natural substrate dTDP-beta-L-noviose. Catalyzes the transfer of L-noviose from dTDP-4-O-demethyl-beta-L-noviose to the phenolic oxygen of novobiocic acid, creating the full ABC ring system in the novobiocin biosynthesis pathway. Novobiocin is an aminocoumarin family antibiotic that targets bacterial DNA gyrases. Also shows activity with variant coumarin aglycones, suggesting it may be a promiscuous catalyst for noviosylation of a range of planar scaffolds. Does not show activity with TDP-L-rhamnose. The polypeptide is L-demethylnoviosyl transferase (novM) (Streptomyces niveus (Streptomyces spheroides)).